We begin with the raw amino-acid sequence, 163 residues long: MQRIAVVPGSFDPVTLGHLDVIRRAARLYDELVVLVVHNPGKTPMLPLGERVALIERVIRDAGLPDTVRVDSWGAGLLVDYCRQVGATVLVKGVRSQLDVTYETPMALVNRDLADVETVLLLPDPAHAHVSSSLVRQVEALGGDVTPYVPAAVADALAVRRAG.

Serine 10 is a substrate binding site. ATP is bound by residues 10-11 (SF) and histidine 18. Lysine 42, leucine 78, and lysine 92 together coordinate substrate. Residues 93 to 95 (GVR), glutamate 103, and 127 to 133 (HAHVSSS) each bind ATP.

This sequence belongs to the bacterial CoaD family. In terms of assembly, homohexamer. Mg(2+) serves as cofactor.

It localises to the cytoplasm. The enzyme catalyses (R)-4'-phosphopantetheine + ATP + H(+) = 3'-dephospho-CoA + diphosphate. Its pathway is cofactor biosynthesis; coenzyme A biosynthesis; CoA from (R)-pantothenate: step 4/5. Its function is as follows. Reversibly transfers an adenylyl group from ATP to 4'-phosphopantetheine, yielding dephospho-CoA (dPCoA) and pyrophosphate. The sequence is that of Phosphopantetheine adenylyltransferase from Clavibacter michiganensis subsp. michiganensis (strain NCPPB 382).